The primary structure comprises 399 residues: Aspartate aminotransferase (399 aa).

The L-aspartate site is built by glycine 42 and asparagine 179. Lysine 240 carries the N6-(pyridoxal phosphate)lysine modification. L-aspartate is bound at residue arginine 372.

This sequence belongs to the class-I pyridoxal-phosphate-dependent aminotransferase family. Homodimer. The cofactor is pyridoxal 5'-phosphate.

It is found in the cytoplasm. It carries out the reaction L-aspartate + 2-oxoglutarate = oxaloacetate + L-glutamate. In Sulfurisphaera tokodaii (strain DSM 16993 / JCM 10545 / NBRC 100140 / 7) (Sulfolobus tokodaii), this protein is Aspartate aminotransferase (aspC).